The sequence spans 627 residues: Anti-CBASS protein Acb1 (627 aa).

Residue Y105 participates in 3',3'-cGAMP binding. Y105 contributes to the 3',3'-cUAMP binding site. Positions 437–474 are disordered; that stretch reads LADQPETESANENTEQPESGEEGEEGQPTRRAANDAKP. Residues H508, T510, H584, and T586 contribute to the active site. The 3',3'-cGAMP site is built by E614 and W620. 3',3'-cUAMP-binding residues include E614 and W620.

The protein belongs to the anti-CBASS protein Acb1 family.

It catalyses the reaction 3',3'-cUAMP + H2O = U[3'-5']pAp[3'] + H(+). The catalysed reaction is 3',3',3'-c-tri-AMP + H2O = A[3'-5']pA[3'-5']pAp[3'] + H(+). It carries out the reaction 3',3',3'-cAAG + H2O = G[3'-5']pA[3'-5']pAp[3'] + H(+). The enzyme catalyses 3',3',3'-cAAG + H2O = A[3'-5']pG[3'-5']pAp[3'] + H(+). It catalyses the reaction 3',3'-cGAMP + H2O = G[3'-5']pAp[3'] + H(+). In terms of biological role, counteracts or regulates the endogenous CBASS antiviral defense system. Phosphodiesterase that enables metal-independent hydrolysis of the host cyclic di- and trinucleotide CBASS signals such as 3'3'-cGAMP, 3'3'cUA, and 3'3'3'-cAAA. This Caulobacter sp. (strain RHG1) protein is Anti-CBASS protein Acb1.